We begin with the raw amino-acid sequence, 946 residues long: DNA primase (946 aa).

A disordered region spans residues 596 to 626; it reads RDTEEDEDGKEDKNNVPGNGVFQKTTSSVDT. The segment covering 617–626 has biased composition (polar residues); sequence FQKTTSSVDT. The segment at 881–920 adopts a CHC2-type zinc-finger fold; it reads CLNYTHRNPQETVQVFIDLRTEHSYALWASLWSRCFTKKC.

The protein belongs to the herpesviridae DNA primase family. Associates with the helicase and the primase-associated factor to form the helicase-primase factor.

The protein resides in the host nucleus. Essential component of the helicase/primase complex. Unwinds the DNA at the replication forks and generates single-stranded DNA for both leading and lagging strand synthesis. The primase initiates primer synthesis and thereby produces large amount of short RNA primers on the lagging strand that the polymerase elongates using dNTPs. This Human cytomegalovirus (strain Merlin) (HHV-5) protein is DNA primase (UL70).